A 262-amino-acid polypeptide reads, in one-letter code: Acyl-[acyl-carrier-protein]--UDP-N-acetylglucosamine O-acyltransferase (262 aa).

The protein belongs to the transferase hexapeptide repeat family. LpxA subfamily. Homotrimer.

It localises to the cytoplasm. It catalyses the reaction a (3R)-hydroxyacyl-[ACP] + UDP-N-acetyl-alpha-D-glucosamine = a UDP-3-O-[(3R)-3-hydroxyacyl]-N-acetyl-alpha-D-glucosamine + holo-[ACP]. The protein operates within glycolipid biosynthesis; lipid IV(A) biosynthesis; lipid IV(A) from (3R)-3-hydroxytetradecanoyl-[acyl-carrier-protein] and UDP-N-acetyl-alpha-D-glucosamine: step 1/6. In terms of biological role, involved in the biosynthesis of lipid A, a phosphorylated glycolipid that anchors the lipopolysaccharide to the outer membrane of the cell. The polypeptide is Acyl-[acyl-carrier-protein]--UDP-N-acetylglucosamine O-acyltransferase (Histophilus somni (strain 2336) (Haemophilus somnus)).